The sequence spans 220 residues: Small ribosomal subunit protein uS3c (220 aa).

Residues 48-119 (VQKHTNNPFH…KLCLILIKID (72 aa)) enclose the KH type-2 domain.

It belongs to the universal ribosomal protein uS3 family. In terms of assembly, part of the 30S ribosomal subunit.

It localises to the plastid. The protein resides in the chloroplast. This chain is Small ribosomal subunit protein uS3c (rps3), found in Psilotum nudum (Whisk fern).